We begin with the raw amino-acid sequence, 333 residues long: Adenosine deaminase (333 aa).

Zn(2+) is bound by residues His12 and His14. Residues His14, Asp16, and Gly170 each coordinate substrate. Zn(2+) is bound at residue His197. The active-site Proton donor is Glu200. Asp278 provides a ligand contact to Zn(2+). Asp279 provides a ligand contact to substrate.

This sequence belongs to the metallo-dependent hydrolases superfamily. Adenosine and AMP deaminases family. Adenosine deaminase subfamily. The cofactor is Zn(2+).

The catalysed reaction is adenosine + H2O + H(+) = inosine + NH4(+). It carries out the reaction 2'-deoxyadenosine + H2O + H(+) = 2'-deoxyinosine + NH4(+). Functionally, catalyzes the hydrolytic deamination of adenosine and 2-deoxyadenosine. The polypeptide is Adenosine deaminase (Escherichia coli (strain SMS-3-5 / SECEC)).